The primary structure comprises 43 residues: uncharacterized protein (43 aa).

A signal peptide spans Met-1–Ala-17.

This is an uncharacterized protein from Helicobacter pylori (strain J99 / ATCC 700824) (Campylobacter pylori J99).